Consider the following 345-residue polypeptide: Probable glucan endo-1,3-beta-glucosidase BG4 (345 aa).

A signal peptide spans 1–22 (MLYSPKKLFLFFLSCIVLYVNS). N-linked (GlcNAc...) asparagine glycans are attached at residues Asn-23 and Asn-119. The active-site Proton donor is Glu-128. Catalysis depends on Glu-267, which acts as the Nucleophile. N-linked (GlcNAc...) asparagine glycosylation is found at Asn-277 and Asn-306.

Belongs to the glycosyl hydrolase 17 family.

It is found in the secreted. The enzyme catalyses Hydrolysis of (1-&gt;3)-beta-D-glucosidic linkages in (1-&gt;3)-beta-D-glucans.. In terms of biological role, may play a role in plant defense against pathogens. This chain is Probable glucan endo-1,3-beta-glucosidase BG4, found in Arabidopsis thaliana (Mouse-ear cress).